Consider the following 309-residue polypeptide: Foldase protein PrsA 2 (309 aa).

The first 22 residues, 1–22, serve as a signal peptide directing secretion; sequence MKQMNKLITGVVTLATVVTLSA. Cys-23 carries N-palmitoyl cysteine lipidation. Cys-23 carries the S-diacylglycerol cysteine lipid modification. The 96-residue stretch at 146–241 folds into the PpiC domain; the sequence is TPTMTAEIMQ…RTYHIIKVTK (96 aa).

Belongs to the PrsA family.

Its subcellular location is the cell membrane. It carries out the reaction [protein]-peptidylproline (omega=180) = [protein]-peptidylproline (omega=0). Its function is as follows. Plays a major role in protein secretion by helping the post-translocational extracellular folding of several secreted proteins. The protein is Foldase protein PrsA 2 of Streptococcus pyogenes serotype M6 (strain ATCC BAA-946 / MGAS10394).